The primary structure comprises 469 residues: Glutamine synthetase (469 aa).

The region spanning 14–98 (NDVKYVDLRF…VVCDVLEPTT (85 aa)) is the GS beta-grasp domain. Residues 106 to 469 (PRGIAKKAMA…PVEFEMYYSV (364 aa)) form the GS catalytic domain. Mg(2+) contacts are provided by Glu-131 and Glu-133. ATP is bound at residue Glu-209. Residues Glu-214 and Glu-221 each coordinate Mg(2+). L-glutamate-binding positions include 265-266 (NG) and Gly-266. His-270 lines the Mg(2+) pocket. ATP contacts are provided by residues 272-274 (HQS) and Ser-274. L-glutamate contacts are provided by Arg-322, Glu-328, and Arg-340. Arg-340, Arg-345, and Lys-353 together coordinate ATP. Residue Glu-358 participates in Mg(2+) binding. L-glutamate is bound at residue Arg-360. The residue at position 398 (Tyr-398) is an O-AMP-tyrosine.

This sequence belongs to the glutamine synthetase family. Oligomer of 12 subunits arranged in the form of two hexameric ring. Mg(2+) is required as a cofactor.

The protein resides in the cytoplasm. The enzyme catalyses L-glutamate + NH4(+) + ATP = L-glutamine + ADP + phosphate + H(+). Its activity is regulated as follows. The activity of this enzyme could be controlled by adenylation under conditions of abundant glutamine. Functionally, catalyzes the ATP-dependent biosynthesis of glutamine from glutamate and ammonia. The protein is Glutamine synthetase of Azorhizobium caulinodans (strain ATCC 43989 / DSM 5975 / JCM 20966 / LMG 6465 / NBRC 14845 / NCIMB 13405 / ORS 571).